The chain runs to 415 residues: MKKYLVGGAVRDGLLQLPVKERDWVVVGATPQEMLAQGYQHVGKDFPVFLHPDSREEYALARTERKSGQGYTGFICYASPEVTLEEDLRRRDLTINAIARDDEGNLIDPYQGQQDIRQRWLRHVSDAFGEDPLRVLRVARFAARFAHLNFRIAPETMALMQQMTDELPLLAPERVWKETERTLATRNPQVYFQVLRDCGALKALFPEVDALFGVPAPAKWHPEIDTGIHTLMTVSMAARLTDDIAVRFATLCHDVGKALTPRELWPSHHGHGPAGVKVVEALCQRLKVPNPLRDLATIVARYHDLLHGAQSLTPKTLIKLFSAIDVWRRPARLEQMILASEADARGRTGFENHAYPQGDFLRDAFRVASSVSARDVMAAGFSGAQIGEELNRRRQQALASWKRQQENSDTETIQD.

Residues glycine 8 and arginine 11 each contribute to the ATP site. 2 residues coordinate CTP: glycine 8 and arginine 11. The Mg(2+) site is built by glutamate 21 and aspartate 23. Residues arginine 91, arginine 137, and arginine 140 each coordinate ATP. Residues arginine 91, arginine 137, and arginine 140 each contribute to the CTP site. The region spanning 226 to 327 is the HD domain; that stretch reads TGIHTLMTVS…IKLFSAIDVW (102 aa).

This sequence belongs to the tRNA nucleotidyltransferase/poly(A) polymerase family. Bacterial CCA-adding enzyme type 1 subfamily. In terms of assembly, monomer. Can also form homodimers and oligomers. Mg(2+) serves as cofactor. The cofactor is Ni(2+).

It catalyses the reaction a tRNA precursor + 2 CTP + ATP = a tRNA with a 3' CCA end + 3 diphosphate. The enzyme catalyses a tRNA with a 3' CCA end + 2 CTP + ATP = a tRNA with a 3' CCACCA end + 3 diphosphate. In terms of biological role, catalyzes the addition and repair of the essential 3'-terminal CCA sequence in tRNAs without using a nucleic acid template. Adds these three nucleotides in the order of C, C, and A to the tRNA nucleotide-73, using CTP and ATP as substrates and producing inorganic pyrophosphate. tRNA 3'-terminal CCA addition is required both for tRNA processing and repair. Also involved in tRNA surveillance by mediating tandem CCA addition to generate a CCACCA at the 3' terminus of unstable tRNAs. While stable tRNAs receive only 3'-terminal CCA, unstable tRNAs are marked with CCACCA and rapidly degraded. The chain is Multifunctional CCA protein from Sodalis glossinidius (strain morsitans).